The primary structure comprises 108 residues: CRISPR-associated endoribonuclease Cas2 (108 aa).

Residue Asp15 coordinates Mg(2+).

The protein belongs to the CRISPR-associated endoribonuclease Cas2 protein family. In terms of assembly, homodimer, forms a heterotetramer with a Cas1 homodimer. Mg(2+) is required as a cofactor.

In terms of biological role, CRISPR (clustered regularly interspaced short palindromic repeat), is an adaptive immune system that provides protection against mobile genetic elements (viruses, transposable elements and conjugative plasmids). CRISPR clusters contain sequences complementary to antecedent mobile elements and target invading nucleic acids. CRISPR clusters are transcribed and processed into CRISPR RNA (crRNA). Functions as a ssRNA-specific endoribonuclease. Involved in the integration of spacer DNA into the CRISPR cassette. The polypeptide is CRISPR-associated endoribonuclease Cas2 (Paracidovorax avenae (strain ATCC 19860 / DSM 7227 / CCUG 15838 / JCM 20985 / LMG 2117 / NCPPB 1011) (Acidovorax avenae)).